We begin with the raw amino-acid sequence, 383 residues long: 8-amino-7-oxononanoate synthase (383 aa).

Residue R21 coordinates substrate. 108 to 109 (GY) provides a ligand contact to pyridoxal 5'-phosphate. H133 is a substrate binding site. Residues S179, H207, and T233 each contribute to the pyridoxal 5'-phosphate site. An N6-(pyridoxal phosphate)lysine modification is found at K236. A substrate-binding site is contributed by T350.

This sequence belongs to the class-II pyridoxal-phosphate-dependent aminotransferase family. BioF subfamily. Homodimer. Pyridoxal 5'-phosphate serves as cofactor.

It catalyses the reaction 6-carboxyhexanoyl-[ACP] + L-alanine + H(+) = (8S)-8-amino-7-oxononanoate + holo-[ACP] + CO2. It participates in cofactor biosynthesis; biotin biosynthesis. Functionally, catalyzes the decarboxylative condensation of pimeloyl-[acyl-carrier protein] and L-alanine to produce 8-amino-7-oxononanoate (AON), [acyl-carrier protein], and carbon dioxide. The polypeptide is 8-amino-7-oxononanoate synthase (Yersinia pseudotuberculosis serotype O:1b (strain IP 31758)).